A 190-amino-acid polypeptide reads, in one-letter code: CD70 antigen (190 aa).

Residues 1–17 lie on the Cytoplasmic side of the membrane; sequence MEEEGSGCNVPRLPWAS. The helical transmembrane segment at 18-38 threads the bilayer; sequence ILRAALLLLLIGMVIYCFLCG. Over 39–190 the chain is Extracellular; the sequence is QRFTQQQLDS…TFFGVQLVRP (152 aa). Residues 52–188 form the THD domain; sequence DLAELLLNHT…DETFFGVQLV (137 aa). N-linked (GlcNAc...) asparagine glycosylation is found at Asn-59 and Asn-110. Cystine bridges form between Cys-111–Cys-148 and Cys-130–Cys-165. Asn-167 is a glycosylation site (N-linked (GlcNAc...) asparagine).

Belongs to the tumor necrosis factor family. Homotrimer. N-glycosylated.

It localises to the cell membrane. Expressed at the plasma membrane of B cells, it is the ligand of the CD27 receptor which is specifically expressed at the surface of T cells. The CD70-CD27 signaling pathway mediates antigen-specific T cell activation and expansion which in turn provides immune surveillance of B cells. The sequence is that of CD70 antigen from Sus scrofa (Pig).